The sequence spans 617 residues: Pentatricopeptide repeat-containing protein At4g18520, chloroplastic (617 aa).

A chloroplast-targeting transit peptide spans 1-19; sequence MFSLSLIQPRLRISEIPVT. PPR repeat units lie at residues 116 to 146, 147 to 181, 183 to 217, 222 to 247, 248 to 282, 283 to 317, 318 to 348, 349 to 383, 384 to 418, 419 to 449, 450 to 484, 485 to 519, 520 to 550, and 551 to 585; these read VIYFGNNLISSCVRLGDLVYARKVFDSMPEK, NTVTWTAMIDGYLKYGLEDEAFALFEDYVKHGIRF, NERMFVCLLNLCSRRAEFELGRQVHGNMVKVGVGN, SSLVYFYAQCGELTSALRAFDMMEEK, DVISWTAVISACSRKGHGIKAIGMFIGMLNHWFLP, NEFTVCSILKACSEEKALRFGRQVHSLVVKRMIKT, DVFVGTSLMDMYAKCGEISDCRKVFDGMSNR, NTVTWTSIIAAHAREGFGEEAISLFRIMKRRHLIA, NNLTVVSILRACGSVGALLLGKELHAQIIKNSIEK, NVYIGSTLVWLYCKCGESRDAFNVLQQLPSR, DVVSWTAMISGCSSLGHESEALDFLKEMIQEGVEP, NPFTYSSALKACANSESLLIGRSIHSIAKKNHALS, NVFVGSALIHMYAKCGFVSEAFRVFDSMPEK, and NLVSWKAMIMGYARNGFCREALKLMYRMEAEGFEV.

This sequence belongs to the PPR family. PCMP-A subfamily. As to quaternary structure, interacts with MORF8/RIP1, MORF2/RIP2 and MORF9/RIP9. In terms of tissue distribution, expressed specifically in aerial greening tissues, such as cotyledons, rosette leaves, cauline leaves, stems, sepals, stamens, carpels and siliques.

The protein resides in the plastid. The protein localises to the chloroplast. In terms of biological role, required for proper chloroplast development. Involved in the regulation of plastid gene expression probably through regulation of plastid-encoded polymerase (PEP) dependent chloroplast transcription. Required for RNA editing of several chloroplastic transcripts, especially accD transcripts. Required for processing of the chloroplastic rpoA pre-mRNA. Required for the monocistronic rpoA transcript processing from the rpl23-rpl2-rps19-rpl22-rps3-rpl16-rpl14-rps8-rpl36-rps11-rpoA polycistron. Binds the intergenic sequence of rps11-rpoA for rpoA monocistronic RNA cleavage. The chain is Pentatricopeptide repeat-containing protein At4g18520, chloroplastic (PCMP-A2) from Arabidopsis thaliana (Mouse-ear cress).